Consider the following 142-residue polypeptide: Large ribosomal subunit protein uL11 (142 aa).

The protein belongs to the universal ribosomal protein uL11 family. As to quaternary structure, part of the ribosomal stalk of the 50S ribosomal subunit. Interacts with L10 and the large rRNA to form the base of the stalk. L10 forms an elongated spine to which L12 dimers bind in a sequential fashion forming a multimeric L10(L12)X complex. One or more lysine residues are methylated.

Functionally, forms part of the ribosomal stalk which helps the ribosome interact with GTP-bound translation factors. This is Large ribosomal subunit protein uL11 from Photorhabdus laumondii subsp. laumondii (strain DSM 15139 / CIP 105565 / TT01) (Photorhabdus luminescens subsp. laumondii).